The sequence spans 427 residues: UPF0229 protein YeaH (427 aa).

Residues 79 to 90 (NDHFVQNDRIER) are compositionally biased toward basic and acidic residues. A disordered region spans residues 79–110 (NDHFVQNDRIERPQGGGGGSGSGQGQASQDGE). The span at 92-102 (QGGGGGSGSGQ) shows a compositional bias: gly residues.

Belongs to the UPF0229 family.

This is UPF0229 protein YeaH from Escherichia coli O127:H6 (strain E2348/69 / EPEC).